Reading from the N-terminus, the 541-residue chain is MASKDVKFAGDARARLLSGIDTLADAVKVTLGPKGRNVVIDKSFGAPRITKDGVTVAKEIELSDKFENLGAQLLREVASKTNDLAGDGTTTATVLAQSIVREGLKAVAAGFNPQDVKRGIDHATTAVIEELRTRTRPIATREETAQVATISANGEVEIGRIISEAVQKVGKDGVITVEEAKGFETELDVVEGLQFDRGYISPYFVTNSEKLIADLENPYILIHEKKLSSLQPLLPLLENVVKSGRPLLSIAEDVEGEALATLVVNKLRGGLKIAAVKAPGFGDRRKAILEDIAILTGGEVISEDLGIKLESVTLSQLGQARRIVIDKDNTTIVDGEGDADAIKGRVGQIRAQIEETTSDYDREKLQERLAKLAGGVAIIRVGGSTEIEVKERKDRVDDALNATRAAVEEGIVPGGGTALARAAEVVARLQFHNDDQRIGGDIVRKALQAPLRQIAENAGEDGAVVAGKVLENGAYNFGFDAQIGEFKDLVAAGIIDPTKVVRTALQDAASVGSLLITTEVLVTEKAEPKPAAPPAGADLGY.

ATP is bound by residues 30–33 (TLGP), K51, 87–91 (DGTTT), G415, and D496.

The protein belongs to the chaperonin (HSP60) family. In terms of assembly, forms a cylinder of 14 subunits composed of two heptameric rings stacked back-to-back. Interacts with the co-chaperonin GroES.

The protein resides in the cytoplasm. It catalyses the reaction ATP + H2O + a folded polypeptide = ADP + phosphate + an unfolded polypeptide.. Its function is as follows. Together with its co-chaperonin GroES, plays an essential role in assisting protein folding. The GroEL-GroES system forms a nano-cage that allows encapsulation of the non-native substrate proteins and provides a physical environment optimized to promote and accelerate protein folding. The polypeptide is Chaperonin GroEL 2 (Gluconacetobacter diazotrophicus (strain ATCC 49037 / DSM 5601 / CCUG 37298 / CIP 103539 / LMG 7603 / PAl5)).